Reading from the N-terminus, the 708-residue chain is Exocyst complex component 5 (708 aa).

Position 2 is an N-acetylalanine (Ala-2). A coiled-coil region spans residues Lys-40–Glu-101. Phosphothreonine occurs at positions 122, 395, and 405. At Ser-412 the chain carries Phosphoserine.

It belongs to the SEC10 family. The exocyst complex is composed of EXOC1, EXOC2, EXOC3, EXOC4, EXOC5, EXOC6, EXOC7 and EXOC8. Interacts with EXOC3L1. Ubiquitous.

Its subcellular location is the cytoplasm. The protein resides in the midbody. Its function is as follows. Component of the exocyst complex involved in the docking of exocytic vesicles with fusion sites on the plasma membrane. This chain is Exocyst complex component 5 (EXOC5), found in Homo sapiens (Human).